A 156-amino-acid chain; its full sequence is Endogenous retrovirus group K member 113 Pro protein (156 aa).

In terms of domain architecture, Peptidase A2 spans 21 to 96 (FEGLVDTGAD…IPLNLWGRDL (76 aa)). Asp26 is a catalytic residue. In terms of domain architecture, G-patch spans 111–156 (YSPTSQKIMTKMGYIPGKGLGKNEDGIKIPVEAKINQKREGIGYPF).

This sequence belongs to the peptidase A2 family. HERV class-II K(HML-2) subfamily. In terms of assembly, active as a homodimer. Autoproteolytically processed at the N-terminus. Expected C-terminal autoprocessing not detected. The sequence shown is that of the processed Pro protein.

It carries out the reaction Processing at the authentic HIV-1 PR recognition site and release of the mature p17 matrix and the p24 capsid protein, as a result of the cleavage of the -SQNY-|-PIVQ- cleavage site.. Its function is as follows. Retroviral proteases have roles in the processing of the primary translation products and the maturation of the viral particle. Endogenous Pro proteins may have kept, lost or modified their original function during evolution. The polypeptide is Endogenous retrovirus group K member 113 Pro protein (HERVK_113) (Homo sapiens (Human)).